A 96-amino-acid polypeptide reads, in one-letter code: Small ribosomal subunit protein bS18 (96 aa).

This sequence belongs to the bacterial ribosomal protein bS18 family. As to quaternary structure, part of the 30S ribosomal subunit. Forms a tight heterodimer with protein bS6.

Functionally, binds as a heterodimer with protein bS6 to the central domain of the 16S rRNA, where it helps stabilize the platform of the 30S subunit. The protein is Small ribosomal subunit protein bS18 of Borreliella afzelii (strain PKo) (Borrelia afzelii).